Consider the following 554-residue polypeptide: Guanine nucleotide-binding protein alpha-2 subunit (554 aa).

Disordered regions lie at residues 1–139 (MGLC…NNSN) and 157–183 (VNGNSTNSDKALSNQFDQSNNSETHSG). The N-myristoyl glycine moiety is linked to residue glycine 2. A lipid anchor (S-palmitoyl cysteine) is attached at cysteine 4. Composition is skewed to basic and acidic residues over residues 7–17 (KDSRESTHDGG) and 28–43 (ANRRNDVRKGAGDKKQ). The span at 52 to 66 (GSIVNAASNINNSSS) shows a compositional bias: low complexity. The segment covering 67-85 (GKTKISTVSEDGTVSNGVG) has biased composition (polar residues). Positions 91–139 (DNANNKNNGNNNNSNNNDNNNNNNNNIGNNINGNNNNDSENIHDSNNSN) are enriched in low complexity. The 327-residue stretch at 228-554 (NALKVLLLGS…ENSLKDSGVL (327 aa)) folds into the G-alpha domain. The segment at 231–244 (KVLLLGSGESGKST) is G1 motif. GTP contacts are provided by glutamate 239, serine 240, glycine 241, lysine 242, serine 243, threonine 244, aspartate 351, isoleucine 376, threonine 382, glycine 405, asparagine 471, lysine 472, aspartate 474, and alanine 526. Mg(2+) is bound at residue serine 243. Positions 374–382 (DVIRTRKKT) are G2 motif. Threonine 382 serves as a coordination point for Mg(2+). The interval 398 to 407 (LHFFDVGGQR) is G3 motif. The interval 467-474 (VLFLNKID) is G4 motif. The tract at residues 524-529 (TQATDT) is G5 motif.

It belongs to the G-alpha family. G proteins are composed of 3 units; alpha, beta and gamma. The alpha chain contains the guanine nucleotide binding site. Mg(2+) serves as cofactor.

Guanine nucleotide-binding proteins (G proteins) are involved as modulators or transducers in various transmembrane signaling systems. This protein may be involved in the determination of the cAMP level according to nutritional conditions, most probably as a regulator of adenylyl cyclase. The sequence is that of Guanine nucleotide-binding protein alpha-2 subunit (GPA2) from Kluyveromyces lactis (strain ATCC 8585 / CBS 2359 / DSM 70799 / NBRC 1267 / NRRL Y-1140 / WM37) (Yeast).